Reading from the N-terminus, the 185-residue chain is MQQGKDSEQIAQRYAEALKELALSETGLLEQFGNDTDGMLQVMEESPDFERFLVVPIIAMADKKRLLVEAFGGKVHPYMLNFLQLMVDRRRIALLRPVCTSYQRILRELQQTTLAEVISAVPLSEEQASALIERIRRRTAAVRVELRRRVDPELLGGMIIKIGDEVIDASLRGQLRKLTLQLTLS.

This sequence belongs to the ATPase delta chain family. As to quaternary structure, F-type ATPases have 2 components, F(1) - the catalytic core - and F(0) - the membrane proton channel. F(1) has five subunits: alpha(3), beta(3), gamma(1), delta(1), epsilon(1). CF(0) has four main subunits: a(1), b(1), b'(1) and c(10-14). The alpha and beta chains form an alternating ring which encloses part of the gamma chain. F(1) is attached to F(0) by a central stalk formed by the gamma and epsilon chains, while a peripheral stalk is formed by the delta, b and b' chains.

It localises to the cell inner membrane. F(1)F(0) ATP synthase produces ATP from ADP in the presence of a proton or sodium gradient. F-type ATPases consist of two structural domains, F(1) containing the extramembraneous catalytic core and F(0) containing the membrane proton channel, linked together by a central stalk and a peripheral stalk. During catalysis, ATP synthesis in the catalytic domain of F(1) is coupled via a rotary mechanism of the central stalk subunits to proton translocation. In terms of biological role, this protein is part of the stalk that links CF(0) to CF(1). It either transmits conformational changes from CF(0) to CF(1) or is implicated in proton conduction. This is ATP synthase subunit delta from Gloeobacter violaceus (strain ATCC 29082 / PCC 7421).